The primary structure comprises 236 residues: 5'-methylthioadenosine/S-adenosylhomocysteine nucleosidase (236 aa).

The active-site Proton acceptor is the E12. Substrate-binding positions include G78, I153, and 174-175; that span reads ME. The active-site Proton donor is the D198.

This sequence belongs to the PNP/UDP phosphorylase family. MtnN subfamily.

It catalyses the reaction S-adenosyl-L-homocysteine + H2O = S-(5-deoxy-D-ribos-5-yl)-L-homocysteine + adenine. It carries out the reaction S-methyl-5'-thioadenosine + H2O = 5-(methylsulfanyl)-D-ribose + adenine. The catalysed reaction is 5'-deoxyadenosine + H2O = 5-deoxy-D-ribose + adenine. Its pathway is amino-acid biosynthesis; L-methionine biosynthesis via salvage pathway; S-methyl-5-thio-alpha-D-ribose 1-phosphate from S-methyl-5'-thioadenosine (hydrolase route): step 1/2. In terms of biological role, catalyzes the irreversible cleavage of the glycosidic bond in both 5'-methylthioadenosine (MTA) and S-adenosylhomocysteine (SAH/AdoHcy) to adenine and the corresponding thioribose, 5'-methylthioribose and S-ribosylhomocysteine, respectively. Also cleaves 5'-deoxyadenosine, a toxic by-product of radical S-adenosylmethionine (SAM) enzymes, into 5-deoxyribose and adenine. The chain is 5'-methylthioadenosine/S-adenosylhomocysteine nucleosidase from Shewanella sp. (strain MR-7).